Consider the following 126-residue polypeptide: Fluoride-specific ion channel FluC 2 (126 aa).

Helical transmembrane passes span valine 11–histidine 31, leucine 36–alanine 56, alanine 69–phenylalanine 89, and phenylalanine 93–phenylalanine 113. The Na(+) site is built by glycine 76 and threonine 79.

Belongs to the fluoride channel Fluc/FEX (TC 1.A.43) family.

Its subcellular location is the cell membrane. It carries out the reaction fluoride(in) = fluoride(out). With respect to regulation, na(+) is not transported, but it plays an essential structural role and its presence is essential for fluoride channel function. Functionally, fluoride-specific ion channel. Important for reducing fluoride concentration in the cell, thus reducing its toxicity. The polypeptide is Fluoride-specific ion channel FluC 2 (Methanosarcina mazei (strain ATCC BAA-159 / DSM 3647 / Goe1 / Go1 / JCM 11833 / OCM 88) (Methanosarcina frisia)).